The following is a 147-amino-acid chain: Endoribonuclease YbeY (147 aa).

Zn(2+) is bound by residues His109, His113, and His119.

It belongs to the endoribonuclease YbeY family. Zn(2+) is required as a cofactor.

It is found in the cytoplasm. In terms of biological role, single strand-specific metallo-endoribonuclease involved in late-stage 70S ribosome quality control and in maturation of the 3' terminus of the 16S rRNA. The sequence is that of Endoribonuclease YbeY from Magnetococcus marinus (strain ATCC BAA-1437 / JCM 17883 / MC-1).